A 359-amino-acid chain; its full sequence is Peptide chain release factor 1 (359 aa).

An N5-methylglutamine modification is found at glutamine 235. The disordered stretch occupies residues glutamine 283–tyrosine 309.

Belongs to the prokaryotic/mitochondrial release factor family. Methylated by PrmC. Methylation increases the termination efficiency of RF1.

The protein localises to the cytoplasm. In terms of biological role, peptide chain release factor 1 directs the termination of translation in response to the peptide chain termination codons UAG and UAA. The polypeptide is Peptide chain release factor 1 (Brucella abortus (strain S19)).